The primary structure comprises 297 residues: N-acetylneuraminate lyase (297 aa).

Aceneuramate is bound by residues Ser-47 and Thr-48. The active-site Proton donor is the Tyr-137. The active-site Schiff-base intermediate with substrate is the Lys-165. Residues Thr-167, Gly-189, Asp-191, Glu-192, and Ser-208 each coordinate aceneuramate.

Belongs to the DapA family. NanA subfamily. Homotetramer.

The protein localises to the cytoplasm. It carries out the reaction aceneuramate = aldehydo-N-acetyl-D-mannosamine + pyruvate. It functions in the pathway amino-sugar metabolism; N-acetylneuraminate degradation; D-fructose 6-phosphate from N-acetylneuraminate: step 1/5. In terms of biological role, catalyzes the reversible aldol cleavage of N-acetylneuraminic acid (sialic acid; Neu5Ac) to form pyruvate and N-acetylmannosamine (ManNAc) via a Schiff base intermediate. The polypeptide is N-acetylneuraminate lyase (Escherichia coli (strain SMS-3-5 / SECEC)).